Reading from the N-terminus, the 410-residue chain is Digeranylgeranylglycerophospholipid reductase (410 aa).

6 residues coordinate FAD: Ala-15, Glu-34, Val-118, Asp-286, Gly-298, and Ile-299. Positions 343 and 379 each coordinate a 2,3-bis-O-(geranylgeranyl)-sn-glycerol 1-phospholipid.

Belongs to the geranylgeranyl reductase family. DGGGPL reductase subfamily. FAD is required as a cofactor.

The catalysed reaction is a 2,3-bis-O-phytanyl-sn-glycerol 1-phospholipid + 8 A = a 2,3-bis-O-(geranylgeranyl)-sn-glycerol 1-phospholipid + 8 AH2. The enzyme catalyses 2,3-bis-O-(phytanyl)-sn-glycerol 1-phosphate + 8 A = 2,3-bis-O-(geranylgeranyl)-sn-glycerol 1-phosphate + 8 AH2. It carries out the reaction CDP-2,3-bis-O-(geranylgeranyl)-sn-glycerol + 8 AH2 = CDP-2,3-bis-O-(phytanyl)-sn-glycerol + 8 A. It catalyses the reaction archaetidylserine + 8 AH2 = 2,3-bis-O-phytanyl-sn-glycero-3-phospho-L-serine + 8 A. Its pathway is membrane lipid metabolism; glycerophospholipid metabolism. In terms of biological role, is involved in the reduction of 2,3-digeranylgeranylglycerophospholipids (unsaturated archaeols) into 2,3-diphytanylglycerophospholipids (saturated archaeols) in the biosynthesis of archaeal membrane lipids. Can fully reduce the unsaturated isoprenoid side chains of membrane phospholipids and glycolipids. Is also able to reduce the omega-position isoprene of dolichol phosphate. This Haloferax volcanii (strain ATCC 29605 / DSM 3757 / JCM 8879 / NBRC 14742 / NCIMB 2012 / VKM B-1768 / DS2) (Halobacterium volcanii) protein is Digeranylgeranylglycerophospholipid reductase.